We begin with the raw amino-acid sequence, 619 residues long: MPEYRSKTSTHGRNMAGARALWRATGVMETDFGKPIIAVANSFTQFVPGHVHLHNMGQLVAREIEKAGAIAKEFNTIAIDDGIAMGHSGMLYSLPSRDLIADSIEYMVNAHCADALVCISNCDKITPGMLIAAMRLNIPTIFVSGGPMEAGKVIGVANIQPERRLDLIDAMIESADDNVSNRQVEEVEQNACPTCGSCSGMFTANSMNCLTEALGLSLPGNGSYLATHAGRKELFLEAGRMIVEITKRYYEQDDETVLPRSIATKKAFENAMTMDIAMGGSTNTILHLLAVANEAGVDFKMADIDRLSRVVPCICKTAPNNHDYYMEDVHRAGGIFAILKELDKAGKLHTDVYTIHAPTLKDAIEKWDVTNPENTRAIERFKAAPGGVRTTQAFSQNRIWKTLDLDREKGCIRDVAHAYSQDGGLAVLFGNIAERGCVVKTAGVDESILKFTGRARVFESQEAAVEGILGNQIVAGNIVIIRYEGPKGGPGMQEMLYPTSYLKSKGLGKACALLTDGRFSGGTSGLSIGHASPEAAEGGAIGLVHEGDTIEIDIPKRSIRLVISDEELAARRAEMEARGSKAWKPENRDRYVSAALRAYGAMATSADKGAVRDVSQIER.

Asp81 serves as a coordination point for Mg(2+). Cys122 lines the [2Fe-2S] cluster pocket. Asp123 and Lys124 together coordinate Mg(2+). Lys124 carries the N6-carboxylysine modification. Residue Cys198 participates in [2Fe-2S] cluster binding. Position 494 (Glu494) interacts with Mg(2+). Ser520 acts as the Proton acceptor in catalysis.

It belongs to the IlvD/Edd family. As to quaternary structure, homodimer. [2Fe-2S] cluster is required as a cofactor. The cofactor is Mg(2+).

It catalyses the reaction (2R)-2,3-dihydroxy-3-methylbutanoate = 3-methyl-2-oxobutanoate + H2O. It carries out the reaction (2R,3R)-2,3-dihydroxy-3-methylpentanoate = (S)-3-methyl-2-oxopentanoate + H2O. Its pathway is amino-acid biosynthesis; L-isoleucine biosynthesis; L-isoleucine from 2-oxobutanoate: step 3/4. The protein operates within amino-acid biosynthesis; L-valine biosynthesis; L-valine from pyruvate: step 3/4. Functions in the biosynthesis of branched-chain amino acids. Catalyzes the dehydration of (2R,3R)-2,3-dihydroxy-3-methylpentanoate (2,3-dihydroxy-3-methylvalerate) into 2-oxo-3-methylpentanoate (2-oxo-3-methylvalerate) and of (2R)-2,3-dihydroxy-3-methylbutanoate (2,3-dihydroxyisovalerate) into 2-oxo-3-methylbutanoate (2-oxoisovalerate), the penultimate precursor to L-isoleucine and L-valine, respectively. This is Dihydroxy-acid dehydratase from Neisseria gonorrhoeae (strain ATCC 700825 / FA 1090).